We begin with the raw amino-acid sequence, 506 residues long: Histone deacetylase complex subunit CTI6 (506 aa).

The tract at residues 49-71 is disordered; it reads EESVKQEDVPMEGGEGEVEEEEG. Residues 62–71 show a composition bias toward acidic residues; the sequence is GEGEVEEEEG. The segment at 72 to 123 adopts a PHD-type zinc-finger fold; it reads ETRCICGELDTPDDSGFFIQCEQCSSWQHGYCVSITQDNAPDKYWCEQCRPE. The segment at 138–425 is disordered; the sequence is IYKPVQEKRR…KPRLPPQRTS (288 aa). Thr-174 carries the phosphothreonine modification. Ser-175 carries the phosphoserine modification. Residue Thr-177 is modified to Phosphothreonine. The span at 179-195 shows a compositional bias: acidic residues; that stretch reads DNVDDIGDEEDEVEDEA. Phosphoserine occurs at positions 216 and 267. 2 stretches are compositionally biased toward basic and acidic residues: residues 231–271 and 312–342; these read DSDK…HQED and DDMKESLRPSKEQSMEKTNDVEKEASQEKES. Basic residues predominate over residues 373–393; that stretch reads ASSRGSKRVSKPARKGNRTRR. Residues 394–404 are compositionally biased toward polar residues; it reads SNTSSDTNQNR. A compositionally biased stretch (basic and acidic residues) spans 405–415; that stretch reads RSADIGTDKPV.

Component of the RPD3C(L) complex composed of at least ASH1, CTI6, DEP1, PHO23, RPD3, RXT2, RXT3, SAP30, SDS3, SIN3, UME1 and UME6. Interacts with CYC8.

It is found in the nucleus. In terms of biological role, component of the RPD3C(L) histone deacetylase complex (HDAC). Responsible for the deacetylation of lysine residues on the N-terminal part of the core histones (H2A, H2B, H3 and H4). Histone deacetylation gives a tag for epigenetic repression and plays an important role in transcriptional regulation, cell cycle progression and developmental events. CTI6 links the SAGA coactivator to the CYC8-TUP1 corepressor. Involved in transcription regulation of heme-regulated genes and required for GCN5 recruitment, histone H3 acetylation and SPT15/TBP binding to promoters. The sequence is that of Histone deacetylase complex subunit CTI6 (CTI6) from Saccharomyces cerevisiae (strain ATCC 204508 / S288c) (Baker's yeast).